The primary structure comprises 580 residues: Conglutin beta 3 (580 aa).

An N-terminal signal peptide occupies residues 1 to 30 (MAKMRVRFPTLVLLLGIVFLMAVSIGIAYG). Composition is skewed to basic and acidic residues over residues 37–72 (NHERPQEREQEERDPRQQPRPHHQEEQEREHRRESE) and 79–92 (REQRREPRREREQE). A disordered region spans residues 37-165 (NHERPQEREQ…DSRRQRNPYY (129 aa)). The span at 124–133 (QGSSSSSRRQ) shows a compositional bias: low complexity. Positions 134 to 145 (SGYERREQREER) are enriched in basic and acidic residues. Cupin type-1 domains lie at 164–322 (YYFS…EEIQ) and 381–538 (FNLR…EDVE). N-linked (GlcNAc...) asparagine glycans are attached at residues asparagine 229 and asparagine 488. Residues 549-569 (FANAQPQQQQQREREGRHGRR) form a disordered region.

It belongs to the 7S seed storage protein family. In terms of assembly, component of globulins complexes which accumulate in seeds.

Its function is as follows. Seed storage protein. Accumulates during seed development and is hydrolyzed after germination to provide a carbon and nitrogen source for the developing seedling. This Lupinus angustifolius (Narrow-leaved blue lupine) protein is Conglutin beta 3.